Here is a 111-residue protein sequence, read N- to C-terminus: uncharacterized protein (111 aa).

Its subcellular location is the mitochondrion. This is an uncharacterized protein from Arabidopsis thaliana (Mouse-ear cress).